Consider the following 230-residue polypeptide: Rab15 effector protein (230 aa).

Residue Gly-2 is the site of N-myristoyl glycine attachment.

As to quaternary structure, interacts with the GTP-bound form of RAB15, RAB3A-D and RAB34.

It localises to the early endosome membrane. Its function is as follows. Effector that interacts with Rab GTPases in their active form (GTP-bound) including RAB15, RAB3A-D and RAB34. Controls downstream signaling such as cell proliferation and cell migration. Also regulates transferrin receptor recycling from the endocytic recycling compartment. The sequence is that of Rab15 effector protein from Mus musculus (Mouse).